A 589-amino-acid polypeptide reads, in one-letter code: UvrABC system protein C (589 aa).

One can recognise a GIY-YIG domain in the interval 14 to 91 (HKPGCYLWKD…IAKYKPKYNM (78 aa)).

The protein belongs to the UvrC family. Interacts with UvrB in an incision complex.

It is found in the cytoplasm. In terms of biological role, the UvrABC repair system catalyzes the recognition and processing of DNA lesions. UvrC both incises the 5' and 3' sides of the lesion. The N-terminal half is responsible for the 3' incision and the C-terminal half is responsible for the 5' incision. The chain is UvrABC system protein C from Malacoplasma penetrans (strain HF-2) (Mycoplasma penetrans).